The chain runs to 546 residues: Probable protein kinase UbiB (546 aa).

The Protein kinase domain occupies 124–502; the sequence is DFDITPLASA…RVKQGQSRYL (379 aa). Residues 130–138 and K153 contribute to the ATP site; that span reads LASASIAQV. D288 (proton acceptor) is an active-site residue. The next 2 helical transmembrane spans lie at 501–518 and 523–542; these read YLFG…LLFI and WGMS…LIGW.

This sequence belongs to the ABC1 family. UbiB subfamily.

The protein localises to the cell inner membrane. The protein operates within cofactor biosynthesis; ubiquinone biosynthesis [regulation]. In terms of biological role, is probably a protein kinase regulator of UbiI activity which is involved in aerobic coenzyme Q (ubiquinone) biosynthesis. This is Probable protein kinase UbiB from Cronobacter sakazakii (strain ATCC BAA-894) (Enterobacter sakazakii).